A 223-amino-acid polypeptide reads, in one-letter code: N-terminal Xaa-Pro-Lys N-methyltransferase 1 (223 aa).

Methionine 1 is subject to N-acetylmethionine. Threonine 2 bears the N-acetylthreonine; in N-terminal Xaa-Pro-Lys N-methyltransferase 1, N-terminally processed mark. Residues glycine 69, arginine 74, aspartate 91 to threonine 93, leucine 119 to glutamine 120, and glutamine 135 contribute to the S-adenosyl-L-methionine site.

Belongs to the methyltransferase superfamily. NTM1 family.

Its subcellular location is the nucleus. The enzyme catalyses N-terminal L-alanyl-L-prolyl-L-lysyl-[protein] + 3 S-adenosyl-L-methionine = N-terminal N,N,N-trimethyl-L-alanyl-L-prolyl-L-lysyl-[protein] + 3 S-adenosyl-L-homocysteine + 3 H(+). It carries out the reaction N-terminal L-seryl-L-prolyl-L-lysyl-[protein] + 3 S-adenosyl-L-methionine = N-terminal N,N,N-trimethyl-L-seryl-L-prolyl-L-lysyl-[protein] + 3 S-adenosyl-L-homocysteine + 3 H(+). It catalyses the reaction N-terminal L-prolyl-L-prolyl-L-lysyl-[protein] + 2 S-adenosyl-L-methionine = N-terminal N,N-dimethyl-L-prolyl-L-prolyl-L-lysyl-[protein] + 2 S-adenosyl-L-homocysteine + 2 H(+). Distributive alpha-N-methyltransferase that methylates the N-terminus of target proteins containing the N-terminal motif [Ala/Gly/Pro/Ser]-Pro-Lys when the initiator Met is cleaved. Specifically catalyzes mono-, di- or tri-methylation of the exposed alpha-amino group of the Ala, Gly or Ser residue in the [Ala/Gly/Ser]-Pro-Lys motif and mono- or di-methylation of Pro in the Pro-Pro-Lys motif. Some of the substrates may be primed by NTMT2-mediated monomethylation. Catalyzes the trimethylation of the N-terminal Gly in CENPA (after removal of Met-1). Responsible for the N-terminal methylation of KLHL31, MYL2, MYL3, RB1, RCC1, RPL23A and SET. Required during mitosis for normal bipolar spindle formation and chromosome segregation via its action on RCC1. This chain is N-terminal Xaa-Pro-Lys N-methyltransferase 1 (NTMT1), found in Homo sapiens (Human).